Reading from the N-terminus, the 295-residue chain is Acetyl-coenzyme A carboxylase carboxyl transferase subunit beta (295 aa).

Residues methionine 1–lysine 20 form a disordered region. Positions leucine 28–alanine 295 constitute a CoA carboxyltransferase N-terminal domain. Zn(2+) is bound by residues cysteine 32, cysteine 35, cysteine 51, and cysteine 54. The C4-type zinc-finger motif lies at cysteine 32–cysteine 54.

The protein belongs to the AccD/PCCB family. As to quaternary structure, acetyl-CoA carboxylase is a heterohexamer composed of biotin carboxyl carrier protein (AccB), biotin carboxylase (AccC) and two subunits each of ACCase subunit alpha (AccA) and ACCase subunit beta (AccD). Requires Zn(2+) as cofactor.

It localises to the cytoplasm. The enzyme catalyses N(6)-carboxybiotinyl-L-lysyl-[protein] + acetyl-CoA = N(6)-biotinyl-L-lysyl-[protein] + malonyl-CoA. Its pathway is lipid metabolism; malonyl-CoA biosynthesis; malonyl-CoA from acetyl-CoA: step 1/1. Its function is as follows. Component of the acetyl coenzyme A carboxylase (ACC) complex. Biotin carboxylase (BC) catalyzes the carboxylation of biotin on its carrier protein (BCCP) and then the CO(2) group is transferred by the transcarboxylase to acetyl-CoA to form malonyl-CoA. The chain is Acetyl-coenzyme A carboxylase carboxyl transferase subunit beta from Xanthomonas oryzae pv. oryzae (strain MAFF 311018).